Here is a 238-residue protein sequence, read N- to C-terminus: MVKLMEVYEGKAKKMIPIDDDKLIMEFKDDATAFDGTKKARFKGKGWLNAQLSVIFFKLLEEHGIKTHFIGVAGGNRLIVEKLDMYPLEVVVRNVVAGSLKKRLPLPEGYELPEPIVELYYKNDELHDPMINYYHAKVLGISLDEIKKIEEIALKVNEILKDYLAKKGIILVDFKLEFGKDKNGDIVLADEISPDTCRFWDAKTKRSLDKDVFRFDKGDLIEAYKEIYERITGEKPEF.

It belongs to the SAICAR synthetase family.

The catalysed reaction is 5-amino-1-(5-phospho-D-ribosyl)imidazole-4-carboxylate + L-aspartate + ATP = (2S)-2-[5-amino-1-(5-phospho-beta-D-ribosyl)imidazole-4-carboxamido]succinate + ADP + phosphate + 2 H(+). It participates in purine metabolism; IMP biosynthesis via de novo pathway; 5-amino-1-(5-phospho-D-ribosyl)imidazole-4-carboxamide from 5-amino-1-(5-phospho-D-ribosyl)imidazole-4-carboxylate: step 1/2. This Pyrococcus horikoshii (strain ATCC 700860 / DSM 12428 / JCM 9974 / NBRC 100139 / OT-3) protein is Phosphoribosylaminoimidazole-succinocarboxamide synthase (purC).